We begin with the raw amino-acid sequence, 412 residues long: D-nopaline dehydrogenase (412 aa).

It belongs to the lysopine/nopaline/octopine/opine/vitopine dehydrogenases family. Homotetramer.

It catalyses the reaction D-nopaline + NADP(+) + H2O = L-arginine + 2-oxoglutarate + NADPH + H(+). The chain is D-nopaline dehydrogenase (nos) from Agrobacterium vitis (Rhizobium vitis).